The following is a 437-amino-acid chain: Serine--tRNA ligase (437 aa).

L-serine is bound at residue 244–246 (TAE). 275–277 (RSE) lines the ATP pocket. Residue Glu-298 participates in L-serine binding. 362–365 (EISS) is an ATP binding site. An L-serine-binding site is contributed by Ser-397.

Belongs to the class-II aminoacyl-tRNA synthetase family. Type-1 seryl-tRNA synthetase subfamily. As to quaternary structure, homodimer. The tRNA molecule binds across the dimer.

The protein resides in the cytoplasm. The catalysed reaction is tRNA(Ser) + L-serine + ATP = L-seryl-tRNA(Ser) + AMP + diphosphate + H(+). The enzyme catalyses tRNA(Sec) + L-serine + ATP = L-seryl-tRNA(Sec) + AMP + diphosphate + H(+). The protein operates within aminoacyl-tRNA biosynthesis; selenocysteinyl-tRNA(Sec) biosynthesis; L-seryl-tRNA(Sec) from L-serine and tRNA(Sec): step 1/1. Its function is as follows. Catalyzes the attachment of serine to tRNA(Ser). Is also able to aminoacylate tRNA(Sec) with serine, to form the misacylated tRNA L-seryl-tRNA(Sec), which will be further converted into selenocysteinyl-tRNA(Sec). In Nitrosomonas europaea (strain ATCC 19718 / CIP 103999 / KCTC 2705 / NBRC 14298), this protein is Serine--tRNA ligase.